The primary structure comprises 694 residues: Lamina-associated polypeptide 2, isoform alpha (694 aa).

Positions 5 to 48 (LEDPSVLTKDKLKSELVANNVTLPAGEQRKDVYVQLYLQHLTAR) constitute an LEM-like domain. Disordered regions lie at residues 47–117 (ARNR…ELTN) and 150–209 (REQG…FSEL). A linker region spans residues 49–108 (NRPPLPAGTNSKGPPDFSSDEEREPTPVLGSGAAAAGRSRAAVGRKATKKTDKPRQEDKD). Residue Thr-57 is modified to Phosphothreonine. Ser-59, Ser-66, and Ser-67 each carry phosphoserine. Phosphothreonine is present on Thr-74. Residues 78–93 (GSGAAAAGRSRAAVGR) show a composition bias toward low complexity. A Phosphoserine modification is found at Ser-79. Arg-86 and Arg-88 each carry omega-N-methylarginine. A compositionally biased stretch (basic and acidic residues) spans 97–106 (KKTDKPRQED). Acidic residues predominate over residues 107–117 (KDDLDVTELTN). The LEM domain occupies 109–153 (DLDVTELTNEDLLDQLVKYGVNPGPIVGTTRKLYEKKLLKLREQG). Thr-154 is subject to Phosphothreonine. Residues 155-178 (ESRSSTPLPTISSSAENTRQNGSN) are compositionally biased toward polar residues. 2 positions are modified to phosphoserine: Ser-156 and Ser-159. Phosphothreonine is present on residues Thr-160 and Thr-164. Ser-166 and Ser-168 each carry phosphoserine. Positions 179-191 (DSDRYSDNEEGKK) are enriched in basic and acidic residues. Positions 190–196 (KKKEHKK) match the Nuclear localization signal motif. 6 positions are modified to phosphoserine: Ser-272, Ser-312, Ser-351, Ser-354, Ser-370, and Ser-424. The segment at 338–368 (QPLCPERSHISDQSPLSSKRKALEESESSQL) is disordered. The stretch at 558 to 657 (TESCNQQLDL…VGRRYLWLKD (100 aa)) forms a coiled coil. The residue at position 656 (Lys-656) is an N6-acetyllysine.

It belongs to the LEM family. In terms of assembly, interacts with LMNA, BANF1 and RB1 and with chromosomes. Associates directly or indirectly with lamins at specific cell-cycle stages. Interacts with CMTM6. Post-translationally, phosphorylated in a mitose-specific manner. Expressed in many tissues. Most abundant in adult thymus and fetal liver.

The protein resides in the nucleus. The protein localises to the chromosome. Functionally, may be involved in the structural organization of the nucleus and in the post-mitotic nuclear assembly. Plays an important role, together with LMNA, in the nuclear anchorage of RB1. TP and TP5 may play a role in T-cell development and function. TP5 is an immunomodulating pentapeptide. This is Lamina-associated polypeptide 2, isoform alpha (TMPO) from Homo sapiens (Human).